Here is a 251-residue protein sequence, read N- to C-terminus: Orotidine 5'-phosphate decarboxylase (251 aa).

Residues D19, K42, 69-78, T133, R194, Q204, G224, and R225 contribute to the substrate site; that span reads DLKFHDIPNT. The active-site Proton donor is the K71.

The protein belongs to the OMP decarboxylase family. Type 1 subfamily. As to quaternary structure, homodimer.

It catalyses the reaction orotidine 5'-phosphate + H(+) = UMP + CO2. The protein operates within pyrimidine metabolism; UMP biosynthesis via de novo pathway; UMP from orotate: step 2/2. Its function is as follows. Catalyzes the decarboxylation of orotidine 5'-monophosphate (OMP) to uridine 5'-monophosphate (UMP). The protein is Orotidine 5'-phosphate decarboxylase of Syntrophus aciditrophicus (strain SB).